The chain runs to 79 residues: uncharacterized protein (79 aa).

Helical transmembrane passes span 28–48 (CIIL…ALLA) and 51–71 (VALT…AFTV).

Its subcellular location is the cell membrane. This is an uncharacterized protein from Methanocaldococcus jannaschii (strain ATCC 43067 / DSM 2661 / JAL-1 / JCM 10045 / NBRC 100440) (Methanococcus jannaschii).